A 542-amino-acid polypeptide reads, in one-letter code: CTP synthase (542 aa).

Positions 1-265 are amidoligase domain; that stretch reads MARYVFITGG…DSEVLSAFGI (265 aa). Ser-13 serves as a coordination point for CTP. Ser-13 contacts UTP. 14-19 is a binding site for ATP; that stretch reads SLGKGI. Position 54 (Tyr-54) interacts with L-glutamine. Asp-71 is a binding site for ATP. Asp-71 and Glu-139 together coordinate Mg(2+). CTP contacts are provided by residues 146–148, 186–191, and Lys-222; these read DIE and KTKPTQ. Residues 186 to 191 and Lys-222 contribute to the UTP site; that span reads KTKPTQ. Positions 291 to 541 constitute a Glutamine amidotransferase type-1 domain; that stretch reads TIAVVGKYTG…IEAAIEQSRL (251 aa). Gly-353 is an L-glutamine binding site. The active-site Nucleophile; for glutamine hydrolysis is Cys-380. Residues 381–384, Glu-404, and Arg-469 contribute to the L-glutamine site; that span reads FGMQ. Active-site residues include His-514 and Glu-516.

It belongs to the CTP synthase family. As to quaternary structure, homotetramer.

It carries out the reaction UTP + L-glutamine + ATP + H2O = CTP + L-glutamate + ADP + phosphate + 2 H(+). It catalyses the reaction L-glutamine + H2O = L-glutamate + NH4(+). The enzyme catalyses UTP + NH4(+) + ATP = CTP + ADP + phosphate + 2 H(+). Its pathway is pyrimidine metabolism; CTP biosynthesis via de novo pathway; CTP from UDP: step 2/2. With respect to regulation, allosterically activated by GTP, when glutamine is the substrate; GTP has no effect on the reaction when ammonia is the substrate. The allosteric effector GTP functions by stabilizing the protein conformation that binds the tetrahedral intermediate(s) formed during glutamine hydrolysis. Inhibited by the product CTP, via allosteric rather than competitive inhibition. Functionally, catalyzes the ATP-dependent amination of UTP to CTP with either L-glutamine or ammonia as the source of nitrogen. Regulates intracellular CTP levels through interactions with the four ribonucleotide triphosphates. This chain is CTP synthase, found in Brucella abortus (strain 2308).